The sequence spans 690 residues: DNA-directed RNA polymerase subunit beta' (690 aa).

Zn(2+) is bound by residues cysteine 76, cysteine 78, cysteine 94, and cysteine 97. Mg(2+)-binding residues include aspartate 496, aspartate 498, and aspartate 500.

This sequence belongs to the RNA polymerase beta' chain family. RpoC1 subfamily. As to quaternary structure, in plastids the minimal PEP RNA polymerase catalytic core is composed of four subunits: alpha, beta, beta', and beta''. When a (nuclear-encoded) sigma factor is associated with the core the holoenzyme is formed, which can initiate transcription. Mg(2+) is required as a cofactor. It depends on Zn(2+) as a cofactor.

The protein resides in the plastid. It is found in the chloroplast. It catalyses the reaction RNA(n) + a ribonucleoside 5'-triphosphate = RNA(n+1) + diphosphate. Functionally, DNA-dependent RNA polymerase catalyzes the transcription of DNA into RNA using the four ribonucleoside triphosphates as substrates. This chain is DNA-directed RNA polymerase subunit beta', found in Lemna minor (Common duckweed).